We begin with the raw amino-acid sequence, 414 residues long: Tetraspanning orphan receptor (414 aa).

The Cytoplasmic segment spans residues 1–28 (MPRASALLTSDPRHQFTCCLCLHVRTGT). The helical transmembrane segment at 29–49 (IIFGITQIIIQLIFISFLFLM) threads the bilayer. Residues 50 to 166 (TFNPRLFPED…EIKIRQFSPY (117 aa)) are Extracellular-facing. The chain crosses the membrane as a helical span at residues 167–187 (IAVCVTTFSLAFCCFMVHGAI). Residues 188–194 (TRQPTHL) lie on the Cytoplasmic side of the membrane. Residues 195–215 (LPFFFIQVFDLIICLIHILGF) form a helical membrane-spanning segment. Over 216–241 (MSSTSDIRLMIHTKTGPIYIKSTGLA) the chain is Extracellular. The chain crosses the membrane as a helical span at residues 242–262 (FIILSISCMMLAFKAYCLGMV). Residues 263–414 (WDCYKYLMLN…TSTPSNVHPC (152 aa)) lie on the Cytoplasmic side of the membrane. A disordered region spans residues 306–328 (LTGNLDSANESNTRAHPDPVTYD).

As to quaternary structure, interacts (via N-terminal extracellular domain) with human C2a. Phosphorylated on tyrosine residues.

It is found in the cell membrane. Its function is as follows. Cell surface receptor that binds to human complement C2a protein. This results in inhibition of the classical and lectin pathways of complement activation, probably due to interference with binding of C2a to C4b and interference with cleavage by C1 or MASP2 such that C3 convertase cannot be formed. This infers resistance to complement-mediated cell lysis, allowing parasite survival and infection. The protein is Tetraspanning orphan receptor of Schistosoma japonicum (Blood fluke).